A 39-amino-acid chain; its full sequence is Cytochrome b559 subunit beta (39 aa).

Residues 14–30 (WLAIHGLAVPTVFSLGS) form a helical membrane-spanning segment. H18 provides a ligand contact to heme.

This sequence belongs to the PsbE/PsbF family. As to quaternary structure, heterodimer of an alpha subunit and a beta subunit. PSII is composed of 1 copy each of membrane proteins PsbA, PsbB, PsbC, PsbD, PsbE, PsbF, PsbH, PsbI, PsbJ, PsbK, PsbL, PsbM, PsbT, PsbX, PsbY, PsbZ, Psb30/Ycf12, at least 3 peripheral proteins of the oxygen-evolving complex and a large number of cofactors. It forms dimeric complexes. Requires heme b as cofactor.

The protein resides in the plastid. Its subcellular location is the chloroplast thylakoid membrane. In terms of biological role, this b-type cytochrome is tightly associated with the reaction center of photosystem II (PSII). PSII is a light-driven water:plastoquinone oxidoreductase that uses light energy to abstract electrons from H(2)O, generating O(2) and a proton gradient subsequently used for ATP formation. It consists of a core antenna complex that captures photons, and an electron transfer chain that converts photonic excitation into a charge separation. The protein is Cytochrome b559 subunit beta of Huperzia lucidula (Shining clubmoss).